Consider the following 375-residue polypeptide: Queuine tRNA-ribosyltransferase (375 aa).

Catalysis depends on Asp-93, which acts as the Proton acceptor. Residues Asp-93–Tyr-97, Asp-147, Gln-194, and Gly-221 contribute to the substrate site. Residues Gly-252–Asp-258 are RNA binding. The active-site Nucleophile is the Asp-271. The segment at Thr-276–Arg-280 is RNA binding; important for wobble base 34 recognition. Zn(2+) is bound by residues Cys-309, Cys-311, Cys-314, and His-340.

It belongs to the queuine tRNA-ribosyltransferase family. In terms of assembly, homodimer. Within each dimer, one monomer is responsible for RNA recognition and catalysis, while the other monomer binds to the replacement base PreQ1. The cofactor is Zn(2+).

The enzyme catalyses 7-aminomethyl-7-carbaguanine + guanosine(34) in tRNA = 7-aminomethyl-7-carbaguanosine(34) in tRNA + guanine. It participates in tRNA modification; tRNA-queuosine biosynthesis. Catalyzes the base-exchange of a guanine (G) residue with the queuine precursor 7-aminomethyl-7-deazaguanine (PreQ1) at position 34 (anticodon wobble position) in tRNAs with GU(N) anticodons (tRNA-Asp, -Asn, -His and -Tyr). Catalysis occurs through a double-displacement mechanism. The nucleophile active site attacks the C1' of nucleotide 34 to detach the guanine base from the RNA, forming a covalent enzyme-RNA intermediate. The proton acceptor active site deprotonates the incoming PreQ1, allowing a nucleophilic attack on the C1' of the ribose to form the product. After dissociation, two additional enzymatic reactions on the tRNA convert PreQ1 to queuine (Q), resulting in the hypermodified nucleoside queuosine (7-(((4,5-cis-dihydroxy-2-cyclopenten-1-yl)amino)methyl)-7-deazaguanosine). This is Queuine tRNA-ribosyltransferase from Sphingopyxis alaskensis (strain DSM 13593 / LMG 18877 / RB2256) (Sphingomonas alaskensis).